The sequence spans 918 residues: Glutamate receptor 2.5 (918 aa).

An N-terminal signal peptide occupies residues 1–30; it reads MSLFHHLVSRFLSLWLLIFLVFLVLSLGKS. The Extracellular portion of the chain corresponds to 31-586; it reads QKEALQVKVG…WVFLKPLTKE (556 aa). Residues Asn-46, Asn-58, Asn-122, Asn-336, Asn-340, and Asn-546 are each glycosylated (N-linked (GlcNAc...) asparagine). Residues 587 to 607 form a helical membrane-spanning segment; that stretch reads LWLVTAASFLYIGIMVWIFEY. Residues 608-616 lie on the Cytoplasmic side of the membrane; that stretch reads QADEEFREQ. Residues 617-637 traverse the membrane as a helical segment; sequence MIIDKISSVFYFSFSTLFFAH. Residues 638–647 are Cytoplasmic-facing; it reads RRPSESFFTR. A helical transmembrane segment spans residues 648–668; it reads VLVVVWCFVLLILTQSYTATL. Over 669-828 the chain is Extracellular; sequence TSMLTVQELR…DSPIQLDHHS (160 aa). Residue Asn-791 is glycosylated (N-linked (GlcNAc...) asparagine). A helical transmembrane segment spans residues 829-849; it reads FEALFLIVFVVSVILLLLMLA. Topologically, residues 850–918 are cytoplasmic; the sequence is SRGYQERQHN…VAPLSRLKSA (69 aa). The interval 857–881 is disordered; sequence QHNASPNLPNDQANAAQEEVNEEGN. Residues 866-881 show a composition bias toward low complexity; it reads NDQANAAQEEVNEEGN.

This sequence belongs to the glutamate-gated ion channel (TC 1.A.10.1) family. In terms of assembly, may form heteromers. Expressed predominantly in roots.

Its subcellular location is the membrane. Glutamate-gated receptor that probably acts as a non-selective cation channel. May be involved in light-signal transduction and calcium homeostasis via the regulation of calcium influx into cells. This Arabidopsis thaliana (Mouse-ear cress) protein is Glutamate receptor 2.5 (GLR2.5).